The primary structure comprises 324 residues: IDS-like terpene synthase 1 (324 aa).

Mg(2+) is bound by residues Asp-77 and Asp-81.

Belongs to the FPP/GGPP synthase family. It depends on Mg(2+) as a cofactor.

It carries out the reaction (2E)-geranyl diphosphate = (E)-beta-ocimene + diphosphate. The enzyme catalyses (2E)-geranyl diphosphate + H2O = linalool + diphosphate. The catalysed reaction is (2E,6E)-farnesyl diphosphate = (3E,6E)-alpha-farnesene + diphosphate. It catalyses the reaction (2E,6E,10E)-geranylgeranyl diphosphate = (E,E,E)-alpha-springene + diphosphate. Its function is as follows. Terpene synthase that shows monoterpene synthase activity and produces (E)-beta-ocimene as a major product and linalool as a minor product, using geranyl diphosphate (GPP) as substrate. Also shows sesquiterpene synthase activity as it is able to convert farnesyl diphosphate (FPP) into (E,E)-alpha-farnesene. Finally, TPS1 can convert geranylgeranyl diphosphate into (E,E,E)-alpha-springene. This chain is IDS-like terpene synthase 1, found in Melampsora larici-populina (strain 98AG31 / pathotype 3-4-7) (Poplar leaf rust fungus).